The following is a 327-amino-acid chain: MSQLTEIVEQALAAIEGTDDLKALDEIRVDYLGKKGKITDMMKMMGKLSPAEKPAFGQAVNQAKQAVQKHLSERVEGLKAAELQATLAAESIDVTLPGRRIDNGGLHPVTRTIERIETFFGELGFSVKEGPEIEDDFHNFDALNISEHHPARADHDTFYFNPKVMLRTQTSGVQIRTMENEKPPLRIISPGRVYRNDYDQTHTPMFHQVEGLLVAENVNFAELKGILHDFLRNFFEEDLQVRFRPSYFPFTEPSAEVDVMGKNGKWLEVLGCGMVHPNVLRSVGIDPEKYSGFAFGMGVERLSMLRYGVNDLRSFFENDLRFLKQFK.

Glu-252 contributes to the Mg(2+) binding site.

Belongs to the class-II aminoacyl-tRNA synthetase family. Phe-tRNA synthetase alpha subunit type 1 subfamily. In terms of assembly, tetramer of two alpha and two beta subunits. Mg(2+) is required as a cofactor.

It localises to the cytoplasm. It catalyses the reaction tRNA(Phe) + L-phenylalanine + ATP = L-phenylalanyl-tRNA(Phe) + AMP + diphosphate + H(+). In Shewanella woodyi (strain ATCC 51908 / MS32), this protein is Phenylalanine--tRNA ligase alpha subunit.